The primary structure comprises 404 residues: Cysteine desulfurase IscS (404 aa).

Pyridoxal 5'-phosphate-binding positions include 75–76 (AT), N155, Q183, and 203–205 (SAH). Position 206 is an N6-(pyridoxal phosphate)lysine (K206). T243 contacts pyridoxal 5'-phosphate. Catalysis depends on C328, which acts as the Cysteine persulfide intermediate. C328 contacts [2Fe-2S] cluster.

This sequence belongs to the class-V pyridoxal-phosphate-dependent aminotransferase family. NifS/IscS subfamily. In terms of assembly, homodimer. Forms a heterotetramer with IscU, interacts with other sulfur acceptors. Pyridoxal 5'-phosphate serves as cofactor.

It is found in the cytoplasm. It carries out the reaction (sulfur carrier)-H + L-cysteine = (sulfur carrier)-SH + L-alanine. Its pathway is cofactor biosynthesis; iron-sulfur cluster biosynthesis. Its function is as follows. Master enzyme that delivers sulfur to a number of partners involved in Fe-S cluster assembly, tRNA modification or cofactor biosynthesis. Catalyzes the removal of elemental sulfur atoms from cysteine to produce alanine. Functions as a sulfur delivery protein for Fe-S cluster synthesis onto IscU, an Fe-S scaffold assembly protein, as well as other S acceptor proteins. This Vibrio atlanticus (strain LGP32) (Vibrio splendidus (strain Mel32)) protein is Cysteine desulfurase IscS.